Here is a 1128-residue protein sequence, read N- to C-terminus: DNA-directed RNA polymerase subunit Rpo2 (1128 aa).

DsDNA-binding positions include Lys178, 181 to 182, Lys206, 435 to 439, and 1027 to 1032; these read SN, RGQPN, and RFGEME. Zn(2+) contacts are provided by Cys1061, Cys1064, Cys1079, and His1082.

It belongs to the RNA polymerase beta chain family. In terms of assembly, part of the 13-subunit RNA polymerase complex. It depends on Zn(2+) as a cofactor.

The protein resides in the cytoplasm. The catalysed reaction is RNA(n) + a ribonucleoside 5'-triphosphate = RNA(n+1) + diphosphate. In terms of biological role, DNA-dependent RNA polymerase (RNAP) catalyzes the transcription of DNA into RNA using the four ribonucleoside triphosphates as substrates. This subunit is involved in DNA promoter recognition. This Saccharolobus shibatae (strain ATCC 51178 / DSM 5389 / JCM 8931 / NBRC 15437 / B12) (Sulfolobus shibatae) protein is DNA-directed RNA polymerase subunit Rpo2.